A 249-amino-acid polypeptide reads, in one-letter code: Phosphate import ATP-binding protein PstB (249 aa).

One can recognise an ABC transporter domain in the interval 5 to 244; that stretch reads LRIEDLHFWY…PEKDRTEAYV (240 aa). An ATP-binding site is contributed by 37–44; the sequence is GPSGCGKS.

It belongs to the ABC transporter superfamily. Phosphate importer (TC 3.A.1.7) family. The complex is composed of two ATP-binding proteins (PstB), two transmembrane proteins (PstC and PstA) and a solute-binding protein (PstS).

It localises to the cell inner membrane. It carries out the reaction phosphate(out) + ATP + H2O = ADP + 2 phosphate(in) + H(+). Part of the ABC transporter complex PstSACB involved in phosphate import. Responsible for energy coupling to the transport system. This Salinibacter ruber (strain DSM 13855 / M31) protein is Phosphate import ATP-binding protein PstB.